The chain runs to 107 residues: Thioredoxin (107 aa).

The Thioredoxin domain occupies serine 2–serine 107. Active-site nucleophile residues include cysteine 31 and cysteine 34. Cysteine 31 and cysteine 34 are joined by a disulfide.

Belongs to the thioredoxin family.

The protein resides in the plastid. The protein localises to the chloroplast. Its function is as follows. Participates in various redox reactions through the reversible oxidation of its active center dithiol to a disulfide and catalyzes dithiol-disulfide exchange reactions. In Porphyra purpurea (Red seaweed), this protein is Thioredoxin (trxA).